The sequence spans 330 residues: Phosphate acyltransferase (330 aa).

This sequence belongs to the PlsX family. As to quaternary structure, homodimer. Probably interacts with PlsY.

It is found in the cytoplasm. The enzyme catalyses a fatty acyl-[ACP] + phosphate = an acyl phosphate + holo-[ACP]. It participates in lipid metabolism; phospholipid metabolism. Its function is as follows. Catalyzes the reversible formation of acyl-phosphate (acyl-PO(4)) from acyl-[acyl-carrier-protein] (acyl-ACP). This enzyme utilizes acyl-ACP as fatty acyl donor, but not acyl-CoA. This Lysinibacillus sphaericus (strain C3-41) protein is Phosphate acyltransferase.